A 390-amino-acid chain; its full sequence is Anhydro-N-acetylmuramic acid kinase (390 aa).

9–16 is a binding site for ATP; the sequence is GTSLDGID.

Belongs to the anhydro-N-acetylmuramic acid kinase family.

It catalyses the reaction 1,6-anhydro-N-acetyl-beta-muramate + ATP + H2O = N-acetyl-D-muramate 6-phosphate + ADP + H(+). It functions in the pathway amino-sugar metabolism; 1,6-anhydro-N-acetylmuramate degradation. The protein operates within cell wall biogenesis; peptidoglycan recycling. In terms of biological role, catalyzes the specific phosphorylation of 1,6-anhydro-N-acetylmuramic acid (anhMurNAc) with the simultaneous cleavage of the 1,6-anhydro ring, generating MurNAc-6-P. Is required for the utilization of anhMurNAc either imported from the medium or derived from its own cell wall murein, and thus plays a role in cell wall recycling. This Bacillus cereus (strain B4264) protein is Anhydro-N-acetylmuramic acid kinase.